A 315-amino-acid polypeptide reads, in one-letter code: Acetyl-coenzyme A carboxylase carboxyl transferase subunit alpha (315 aa).

Positions 36 to 289 (LGKKRLELME…RKAVAAELKV (254 aa)) constitute a CoA carboxyltransferase C-terminal domain.

Belongs to the AccA family. In terms of assembly, acetyl-CoA carboxylase is a heterohexamer composed of biotin carboxyl carrier protein (AccB), biotin carboxylase (AccC) and two subunits each of ACCase subunit alpha (AccA) and ACCase subunit beta (AccD).

Its subcellular location is the cytoplasm. It carries out the reaction N(6)-carboxybiotinyl-L-lysyl-[protein] + acetyl-CoA = N(6)-biotinyl-L-lysyl-[protein] + malonyl-CoA. It participates in lipid metabolism; malonyl-CoA biosynthesis; malonyl-CoA from acetyl-CoA: step 1/1. Its function is as follows. Component of the acetyl coenzyme A carboxylase (ACC) complex. First, biotin carboxylase catalyzes the carboxylation of biotin on its carrier protein (BCCP) and then the CO(2) group is transferred by the carboxyltransferase to acetyl-CoA to form malonyl-CoA. The protein is Acetyl-coenzyme A carboxylase carboxyl transferase subunit alpha of Francisella philomiragia subsp. philomiragia (strain ATCC 25017 / CCUG 19701 / FSC 153 / O#319-036).